A 733-amino-acid chain; its full sequence is Catalase-peroxidase (733 aa).

The interval 1–24 is disordered; that stretch reads MTDDSTCPVTGGADKQVTGRGQSY. The tryptophyl-tyrosyl-methioninium (Trp-Tyr) (with M-245) cross-link spans 96-219; the sequence is WHSAGTYRTL…LAAVQMGLIY (124 aa). His97 functions as the Proton acceptor in the catalytic mechanism. A cross-link (tryptophyl-tyrosyl-methioninium (Tyr-Met) (with W-96)) is located at residues 219–245; the sequence is YVNPEGPNGKPDPVAAAKDIRETFARM. His260 contacts heme b.

Belongs to the peroxidase family. Peroxidase/catalase subfamily. Homodimer or homotetramer. It depends on heme b as a cofactor. Formation of the three residue Trp-Tyr-Met cross-link is important for the catalase, but not the peroxidase activity of the enzyme.

It carries out the reaction H2O2 + AH2 = A + 2 H2O. It catalyses the reaction 2 H2O2 = O2 + 2 H2O. Its function is as follows. Bifunctional enzyme with both catalase and broad-spectrum peroxidase activity. In Methanoregula boonei (strain DSM 21154 / JCM 14090 / 6A8), this protein is Catalase-peroxidase.